Here is a 245-residue protein sequence, read N- to C-terminus: 1-(5-phosphoribosyl)-5-[(5-phosphoribosylamino)methylideneamino] imidazole-4-carboxamide isomerase (245 aa).

D8 acts as the Proton acceptor in catalysis. D129 (proton donor) is an active-site residue.

Belongs to the HisA/HisF family.

Its subcellular location is the cytoplasm. The enzyme catalyses 1-(5-phospho-beta-D-ribosyl)-5-[(5-phospho-beta-D-ribosylamino)methylideneamino]imidazole-4-carboxamide = 5-[(5-phospho-1-deoxy-D-ribulos-1-ylimino)methylamino]-1-(5-phospho-beta-D-ribosyl)imidazole-4-carboxamide. Its pathway is amino-acid biosynthesis; L-histidine biosynthesis; L-histidine from 5-phospho-alpha-D-ribose 1-diphosphate: step 4/9. The protein is 1-(5-phosphoribosyl)-5-[(5-phosphoribosylamino)methylideneamino] imidazole-4-carboxamide isomerase of Sinorhizobium fredii (strain NBRC 101917 / NGR234).